A 175-amino-acid chain; its full sequence is Cytochrome c homolog (175 aa).

At 1–8 the chain is on the cytoplasmic side; it reads MSGKELNK. Residues 9–29 traverse the membrane as a helical; Signal-anchor segment; sequence IVAAILFASLIAMMVGFVANI. At 30–175 the chain is on the periplasmic side; that stretch reads LYKPTLELQH…LFLKTYVHDK (146 aa). Heme c contacts are provided by cysteine 84, cysteine 87, histidine 88, and methionine 150.

The protein belongs to the cytochrome c family. Binds 1 heme c group covalently per subunit.

It localises to the cell membrane. In terms of biological role, may be involved in electron transfer from bc1 complex to aa3. The chain is Cytochrome c homolog (cycM) from Rickettsia felis (strain ATCC VR-1525 / URRWXCal2) (Rickettsia azadi).